The sequence spans 268 residues: MEAPKHVNNACVIPNLTLKKMREIELDFPSKKIQEKIATILDTFTELSAELRERKKQYAFYRDYLLNQENIRKIYGANIPFETFQVKDICEIRRGRAITKAYIRNNPGENPVYSAATTNDGELGRIKDCDFDGEYITWTTNGYAGVVFYRNGKFNASQDCGVLKVKNKKICTKFLSFLLKIEAPKFVHNLASRPKLSQKVMAEIELSFPPLEIQEKIADILFAFEKLCNDLVEGIPAEVEMRKKQLDYYQNFLFNWVQEQKTQLEQIM.

It belongs to the type-I restriction system S methylase family. As to quaternary structure, the methyltransferase is composed of M and S polypeptides.

The specificity (S) subunit of a type I methyltransferase (MTase); this subunit dictates DNA sequence specificity. The single R subunit has multiple frameshifts and is probably not expressed. The chain is Putative type I specificity subunit S.MpnORF365P from Mycoplasma pneumoniae (strain ATCC 29342 / M129 / Subtype 1) (Mycoplasmoides pneumoniae).